Here is a 154-residue protein sequence, read N- to C-terminus: 3-hydroxyacyl-[acyl-carrier-protein] dehydratase FabZ (154 aa).

Residue H59 is part of the active site.

Belongs to the thioester dehydratase family. FabZ subfamily.

The protein resides in the cytoplasm. It catalyses the reaction a (3R)-hydroxyacyl-[ACP] = a (2E)-enoyl-[ACP] + H2O. Involved in unsaturated fatty acids biosynthesis. Catalyzes the dehydration of short chain beta-hydroxyacyl-ACPs and long chain saturated and unsaturated beta-hydroxyacyl-ACPs. The protein is 3-hydroxyacyl-[acyl-carrier-protein] dehydratase FabZ of Bartonella bacilliformis (strain ATCC 35685 / KC583 / Herrer 020/F12,63).